The primary structure comprises 939 residues: Valine--tRNA ligase (939 aa).

Residues 47 to 57 carry the 'HIGH' region motif; the sequence is PNVTGILHMGH. The short motif at 563–567 is the 'KMSKS' region element; the sequence is KLSKS. ATP is bound at residue K566. Residues 873 to 939 adopt a coiled-coil conformation; that stretch reads AEHLAKEHAR…QSILDKIASL (67 aa).

Belongs to the class-I aminoacyl-tRNA synthetase family. ValS type 1 subfamily. As to quaternary structure, monomer.

The protein resides in the cytoplasm. The catalysed reaction is tRNA(Val) + L-valine + ATP = L-valyl-tRNA(Val) + AMP + diphosphate. Its function is as follows. Catalyzes the attachment of valine to tRNA(Val). As ValRS can inadvertently accommodate and process structurally similar amino acids such as threonine, to avoid such errors, it has a 'posttransfer' editing activity that hydrolyzes mischarged Thr-tRNA(Val) in a tRNA-dependent manner. The protein is Valine--tRNA ligase of Chlamydia muridarum (strain MoPn / Nigg).